The chain runs to 226 residues: Protein transport protein sec20 (226 aa).

Topologically, residues 1–189 (MADVLNALEE…IKSLKLSDRS (189 aa)) are cytoplasmic. Positions 53–75 (LRYEKAVQEYIRLNRRYRNKIAS) form a coiled coil. Position 97 is a phosphoserine (serine 97). A helical; Anchor for type IV membrane protein transmembrane segment spans residues 190–210 (DYFLVVSGFGFFIFVVVYLLF). Residues 211–226 (KRIVWPILSMFLWFLR) lie on the Lumenal side of the membrane.

It belongs to the SEC20 family. In terms of assembly, component of a SNARE complex consisting of ufe1, sec20, sec22 and use1. Interacts with tip20 through its cytoplasmic domain.

It is found in the endoplasmic reticulum membrane. Functionally, SNARE required for targeting and fusion of Golgi-derived retrograde transport vesicles with the ER. In Schizosaccharomyces pombe (strain 972 / ATCC 24843) (Fission yeast), this protein is Protein transport protein sec20.